Consider the following 577-residue polypeptide: Putative laccase-1 (577 aa).

Residues 1–28 form the signal peptide; the sequence is MGTAKIPALLWFLLAGLVLALAVNPAHG. 2 consecutive Plastocyanin-like domains span residues 37 to 153 and 163 to 316; these read FITE…PKRG and KEIP…YTDS. N-linked (GlcNAc...) asparagine glycans are attached at residues N42 and N83. H87 and H89 together coordinate Cu cation. An N-linked (GlcNAc...) asparagine glycan is attached at N115. Cu cation is bound by residues H132 and H134. Residues N276, N304, N382, and N402 are each glycosylated (N-linked (GlcNAc...) asparagine). In terms of domain architecture, Plastocyanin-like 3 spans 442 to 561; the sequence is DINGGGPLLT…DTMFIVKDGK (120 aa). Residues H478, H481, H483, H540, C541, H542, H546, and M551 each contribute to the Cu cation site.

This sequence belongs to the multicopper oxidase family. Requires Cu cation as cofactor.

The protein localises to the secreted. The protein resides in the extracellular space. It localises to the apoplast. The enzyme catalyses 4 hydroquinone + O2 = 4 benzosemiquinone + 2 H2O. Functionally, lignin degradation and detoxification of lignin-derived products. This is Putative laccase-1 (LAC1) from Oryza sativa subsp. japonica (Rice).